The primary structure comprises 331 residues: DNA-directed RNA polymerase subunit alpha (331 aa).

The interval Met1 to Glu233 is alpha N-terminal domain (alpha-NTD). Positions Lys265–Asp331 are alpha C-terminal domain (alpha-CTD).

It belongs to the RNA polymerase alpha chain family. In plastids the minimal PEP RNA polymerase catalytic core is composed of four subunits: alpha, beta, beta', and beta''. When a (nuclear-encoded) sigma factor is associated with the core the holoenzyme is formed, which can initiate transcription.

The protein resides in the plastid. It localises to the chloroplast. It carries out the reaction RNA(n) + a ribonucleoside 5'-triphosphate = RNA(n+1) + diphosphate. Its function is as follows. DNA-dependent RNA polymerase catalyzes the transcription of DNA into RNA using the four ribonucleoside triphosphates as substrates. The chain is DNA-directed RNA polymerase subunit alpha from Vitis vinifera (Grape).